The chain runs to 302 residues: Sulfate adenylyltransferase subunit 2 (302 aa).

The protein belongs to the PAPS reductase family. CysD subfamily. Heterodimer composed of CysD, the smaller subunit, and CysN.

The enzyme catalyses sulfate + ATP + H(+) = adenosine 5'-phosphosulfate + diphosphate. It functions in the pathway sulfur metabolism; hydrogen sulfide biosynthesis; sulfite from sulfate: step 1/3. With CysN forms the ATP sulfurylase (ATPS) that catalyzes the adenylation of sulfate producing adenosine 5'-phosphosulfate (APS) and diphosphate, the first enzymatic step in sulfur assimilation pathway. APS synthesis involves the formation of a high-energy phosphoric-sulfuric acid anhydride bond driven by GTP hydrolysis by CysN coupled to ATP hydrolysis by CysD. This is Sulfate adenylyltransferase subunit 2 from Yersinia pestis bv. Antiqua (strain Nepal516).